Here is a 380-residue protein sequence, read N- to C-terminus: Probable RAD2-like endonuclease 076L (380 aa).

The interval 1–101 (MGIKNLTQFL…QKIVSKTDAI (101 aa)) is N-domain. Mg(2+) contacts are provided by Asp32, Glu73, Glu191, Glu193, Asp212, Asp214, and Asp281. The I-domain stretch occupies residues 156 to 301 (IDRRRKYEFS…EKAYKYISDY (146 aa)).

It belongs to the XPG/RAD2 endonuclease family. Mg(2+) is required as a cofactor.

The protein resides in the host nucleus. Functionally, probable endonuclease. The sequence is that of Probable RAD2-like endonuclease 076L from Invertebrate iridescent virus 3 (IIV-3).